Consider the following 165-residue polypeptide: Ubiquitin-conjugating enzyme E2 G2 (165 aa).

Ala2 carries the post-translational modification N-acetylalanine. One can recognise a UBC core domain in the interval 4-164; sequence TALKRLMAEY…AKQIVQKSLG (161 aa). Cys89 serves as the catalytic Glycyl thioester intermediate.

It belongs to the ubiquitin-conjugating enzyme family. In terms of assembly, interacts with AUP1 (via C-terminus); the interaction recruits UBE2G2 to lipid droplets. Interacts with ubiquitin ligases AMFR/gp78 and RNF139/TRC8; recruitment to lipid droplets by AUP1 facilitates interaction of UBE2G2 with AMFR and RNF139, leading to sterol-induced ubiquitination of 3-hydroxy-3-methylglutaryl coenzyme A reductase and its subsequent proteasomal degradation.

It is found in the endoplasmic reticulum. Its subcellular location is the lipid droplet. The enzyme catalyses S-ubiquitinyl-[E1 ubiquitin-activating enzyme]-L-cysteine + [E2 ubiquitin-conjugating enzyme]-L-cysteine = [E1 ubiquitin-activating enzyme]-L-cysteine + S-ubiquitinyl-[E2 ubiquitin-conjugating enzyme]-L-cysteine.. Its pathway is protein modification; protein ubiquitination. In terms of biological role, accepts ubiquitin from the E1 complex and catalyzes its covalent attachment to other proteins. In vitro catalyzes 'Lys-48'-linked polyubiquitination. Involved in endoplasmic reticulum-associated degradation (ERAD). Required for sterol-induced ubiquitination of 3-hydroxy-3-methylglutaryl coenzyme A reductase and its subsequent proteasomal degradation. The polypeptide is Ubiquitin-conjugating enzyme E2 G2 (Homo sapiens (Human)).